We begin with the raw amino-acid sequence, 364 residues long: Histidinol-phosphate aminotransferase (364 aa).

Lys-222 is modified (N6-(pyridoxal phosphate)lysine).

Belongs to the class-II pyridoxal-phosphate-dependent aminotransferase family. Histidinol-phosphate aminotransferase subfamily. As to quaternary structure, homodimer. Pyridoxal 5'-phosphate is required as a cofactor.

It catalyses the reaction L-histidinol phosphate + 2-oxoglutarate = 3-(imidazol-4-yl)-2-oxopropyl phosphate + L-glutamate. It participates in amino-acid biosynthesis; L-histidine biosynthesis; L-histidine from 5-phospho-alpha-D-ribose 1-diphosphate: step 7/9. This chain is Histidinol-phosphate aminotransferase, found in Brevibacillus brevis (strain 47 / JCM 6285 / NBRC 100599).